The sequence spans 916 residues: MGRTGDLENAEFFPMTRRRSTSGTSSRSSTDSGLSVDTAYLEDNKHNNFANGTSGLTDETKYRDVEDAEADVDEPFLPTSSKKLGSGSRTRQIFWALVILCLGGWVLALVLFLTHGRASSQTASETLQQQESDSGSTSAGRPVTLQQVLTGSWNPRAHAISWIAGPDGEDGLLVQRAEVDKEGYMRVDDIRSQEGDDVDSQSGRILIDKAAVRVNGETLMPTFTWPSPDLNKVLLMSNHEKNWRYSFTGRYWIFDVATQTAQPLDPSVPDGRVQLALWSPSSDAVVFVRDNNMYLRKLSSESVVSITKDGGEDLFYGIPDWVYEEEVITDKSVTWWSNDGKYVAFLRTNESAVPEFPVQYFVSRPSGKRPPPGLENYPEVRQIKYPKAGSPNPVVNLLFYDVEKDEVFPVDVPDDFPDDDRIIIEVLWASEGKVIVRATNRESDRVKVFLIDTKSRTGKLVRFEDIANLDGGWVEPSHYTKFIPADPSNGRPDDGYIDTVIHDGYDHLAYFTPLDNPDPIMLTTGEWEVVEAPSAVDLRRGIVYFVATKESPTQRHVYRVHLDGSNLQALTDTSKPGFYDVSFSDGAGYALLSYNGPSVPWQAIINTGGDEITFEKTIEKNPRLASMVETYALPTEIYQNVTIDGFTLQLVERRPPHFNPAKKYPVVFQLYNGPTSQRVDRKFTIDFQSYIASNLGYIVVTLDARGTGYSGRKVRCAVRGNLGHYEAHDQITTAKMWAKKPYVDETRMAIWGWSYGGFMTLKVLEQDAGETFQYGMAVAPVTDWRFYDSVYTERYMHTPEHNPSGYENSTITNVSALSKATRFLLIHGASDDNVHIQNTLTFVDKLDLLNVQNYDMHFYPDSDHNIYFHNAHFMIYERLSNWLINAFNGEWHQIANPVPEDSIWDSVKRSVPAFAH.

Disordered regions lie at residues 1–35 (MGRT…SGLS) and 67–86 (DAEA…KLGS). Over 1–92 (MGRTGDLENA…KLGSGSRTRQ (92 aa)) the chain is Cytoplasmic. The span at 21–35 (TSGTSSRSSTDSGLS) shows a compositional bias: low complexity. A helical; Signal-anchor for type II membrane protein membrane pass occupies residues 93–113 (IFWALVILCLGGWVLALVLFL). Over 114-916 (THGRASSQTA…VKRSVPAFAH (803 aa)) the chain is Vacuolar. N-linked (GlcNAc...) asparagine glycosylation is found at asparagine 349 and asparagine 640. Catalysis depends on serine 754, which acts as the Charge relay system. N-linked (GlcNAc...) asparagine glycosylation is found at asparagine 808 and asparagine 813. Catalysis depends on charge relay system residues aspartate 831 and histidine 864.

The protein belongs to the peptidase S9B family.

It is found in the vacuole membrane. The enzyme catalyses Release of an N-terminal dipeptide, Xaa-Yaa-|-Zaa-, from a polypeptide, preferentially when Yaa is Pro, provided Zaa is neither Pro nor hydroxyproline.. Functionally, type IV dipeptidyl-peptidase which removes N-terminal dipeptides sequentially from polypeptides having unsubstituted N-termini provided that the penultimate residue is proline. The protein is Probable dipeptidyl-aminopeptidase B (dapB) of Aspergillus flavus (strain ATCC 200026 / FGSC A1120 / IAM 13836 / NRRL 3357 / JCM 12722 / SRRC 167).